Reading from the N-terminus, the 304-residue chain is UDP-3-O-acyl-N-acetylglucosamine deacetylase (304 aa).

Residues histidine 79, histidine 238, and aspartate 242 each contribute to the Zn(2+) site. Histidine 265 serves as the catalytic Proton donor.

Belongs to the LpxC family. The cofactor is Zn(2+).

It carries out the reaction a UDP-3-O-[(3R)-3-hydroxyacyl]-N-acetyl-alpha-D-glucosamine + H2O = a UDP-3-O-[(3R)-3-hydroxyacyl]-alpha-D-glucosamine + acetate. Its pathway is glycolipid biosynthesis; lipid IV(A) biosynthesis; lipid IV(A) from (3R)-3-hydroxytetradecanoyl-[acyl-carrier-protein] and UDP-N-acetyl-alpha-D-glucosamine: step 2/6. In terms of biological role, catalyzes the hydrolysis of UDP-3-O-myristoyl-N-acetylglucosamine to form UDP-3-O-myristoylglucosamine and acetate, the committed step in lipid A biosynthesis. This is UDP-3-O-acyl-N-acetylglucosamine deacetylase from Chromobacterium violaceum (strain ATCC 12472 / DSM 30191 / JCM 1249 / CCUG 213 / NBRC 12614 / NCIMB 9131 / NCTC 9757 / MK).